The primary structure comprises 291 residues: Segregation and condensation protein A (291 aa).

It belongs to the ScpA family. Component of a cohesin-like complex composed of ScpA, ScpB and the Smc homodimer, in which ScpA and ScpB bind to the head domain of Smc. The presence of the three proteins is required for the association of the complex with DNA.

Its subcellular location is the cytoplasm. Participates in chromosomal partition during cell division. May act via the formation of a condensin-like complex containing Smc and ScpB that pull DNA away from mid-cell into both cell halves. The chain is Segregation and condensation protein A from Malacoplasma penetrans (strain HF-2) (Mycoplasma penetrans).